Here is a 33-residue protein sequence, read N- to C-terminus: GVLGTVKNLLIGAGKSAAQSVLKTLSCKLSNDC.

Expressed by the skin glands.

The protein localises to the secreted. Antimicrobial peptide active against the Gram-positive bacterium S.aureus (MIC=25 uM) and against the Gram-negative bacteria E.coli (MIC=6 uM). Has no antifungal activity against C.albicans. Shows hemolytic activity against human erythrocytes only at high concentrations (LC(50)=180 uM). In Odorrana grahami (Yunnanfu frog), this protein is Brevinin-2GRb.